Consider the following 136-residue polypeptide: T-cell receptor alpha chain constant (136 aa).

The region spanning 19-103 (STLCLFTDFD…LTEKSFETDM (85 aa)) is the Ig-like C1-type domain. Residues Cys22 and Cys72 are joined by a disulfide bond. Residues Asn66, Asn80, and Asn109 are each glycosylated (N-linked (GlcNAc...) asparagine). Positions 90–111 (CDATLTEKSFETDMNLNFQNLS) are connecting peptide. Residues 111 to 131 (SVMGLRILLLKVAGFNLLMTL) form a helical membrane-spanning segment. The Cytoplasmic segment spans residues 132–136 (RLWSS).

Alpha-beta TR is a heterodimer composed of an alpha and beta chain; disulfide-linked. The alpha-beta TR is associated with the transmembrane signaling CD3 coreceptor proteins to form the TR-CD3 (TcR or TCR). The assembly of alpha-beta TR heterodimers with CD3 occurs in the endoplasmic reticulum where a single alpha-beta TR heterodimer associates with one CD3D-CD3E heterodimer, one CD3G-CD3E heterodimer and one CD247 homodimer forming a stable octameric structure. CD3D-CD3E and CD3G-CD3E heterodimers preferentially associate with TR alpha and TR beta chains, respectively. The association of the CD247 homodimer is the last step of TcR assembly in the endoplasmic reticulum and is required for transport to the cell surface.

The protein resides in the cell membrane. Its function is as follows. Constant region of T cell receptor (TR) alpha chain. Alpha-beta T cell receptors are antigen specific receptors which are essential to the immune response and are present on the cell surface of T lymphocytes. Recognize peptide-major histocompatibility (MH) (pMH) complexes that are displayed by antigen presenting cells (APC), a prerequisite for efficient T cell adaptive immunity against pathogens. Binding of alpha-beta TR to pMH complex initiates TR-CD3 clustering on the cell surface and intracellular activation of LCK that phosphorylates the ITAM motifs of CD3G, CD3D, CD3E and CD247 enabling the recruitment of ZAP70. In turn, ZAP70 phosphorylates LAT, which recruits numerous signaling molecules to form the LAT signalosome. The LAT signalosome propagates signal branching to three major signaling pathways, the calcium, the mitogen-activated protein kinase (MAPK) kinase and the nuclear factor NF-kappa-B (NF-kB) pathways, leading to the mobilization of transcription factors that are critical for gene expression and essential for T cell growth and differentiation. The T cell repertoire is generated in the thymus, by V-(D)-J rearrangement. This repertoire is then shaped by intrathymic selection events to generate a peripheral T cell pool of self-MH restricted, non-autoaggressive T cells. Post-thymic interaction of alpha-beta TR with the pMH complexes shapes TR structural and functional avidity. The sequence is that of T-cell receptor alpha chain constant from Mus musculus (Mouse).